Consider the following 267-residue polypeptide: Alkaline ceramidase 3 (267 aa).

The Cytoplasmic segment spans residues 1-33 (MAPAVDRKGYWGPTTSTLDWCEENYVVTLFVAE). The Ca(2+) site is built by Asp19, Trp20, Glu22, Asn24, and Glu33. Residues 34–55 (FWNTVSNLIMIIPPIFGAIQGI) traverse the membrane as a helical segment. Topologically, residues 56 to 61 (RDRLEK) are lumenal. A helical transmembrane segment spans residues 62–82 (RYIAAYLALTVVGMGSWCFHM). His81 contributes to the Zn(2+) binding site. Over 83–87 (TLKYE) the chain is Cytoplasmic. A helical membrane pass occupies residues 88 to 108 (MQLLDELPMIYSCCIFVYCMF). The Lumenal portion of the chain corresponds to 109–118 (ECFKTKSSIN). Residues 119–139 (YHLLFTLFLYSLTVTTIYLKV) form a helical membrane-spanning segment. The Cytoplasmic segment spans residues 140 to 141 (KE). A helical transmembrane segment spans residues 142 to 162 (PIFHQVMYGMLVFTLVLRSIY). Over 163–173 (IVTWVYPWLRG) the chain is Lumenal. A helical membrane pass occupies residues 174 to 194 (LGYTSLTVFLLGFLLWNIDNI). The Cytoplasmic portion of the chain corresponds to 195–215 (FCDSLRNFRKRVPPVLGVTTQ). A helical membrane pass occupies residues 216 to 236 (FHAWWHILTGLGSYLHILFSL). Zn(2+) contacts are provided by His217 and His221. Residues 237–267 (YTRTLYLRYRPKVKFLFGIWPAVMFEPQRKH) are Lumenal-facing.

It belongs to the alkaline ceramidase family. The cofactor is Zn(2+). In terms of tissue distribution, up-regulated with age in cerebeLlum and cerebrum.

It is found in the endoplasmic reticulum membrane. Its subcellular location is the golgi apparatus membrane. The catalysed reaction is an N-acyl-(4R)-4-hydroxysphinganine + H2O = (4R)-hydroxysphinganine + a fatty acid. The enzyme catalyses N-(5Z,8Z,11Z,14Z-eicosatetraenoyl)-sphing-4-enine + H2O = sphing-4-enine + (5Z,8Z,11Z,14Z)-eicosatetraenoate. It catalyses the reaction N-(5Z,8Z,11Z,14Z-eicosatetraenoyl)-sphinganine + H2O = sphinganine + (5Z,8Z,11Z,14Z)-eicosatetraenoate. It carries out the reaction N-(5Z,8Z,11Z,14Z-eicosatetraenoyl)-(4R)-hydroxysphinganine + H2O = (4R)-hydroxysphinganine + (5Z,8Z,11Z,14Z)-eicosatetraenoate. The catalysed reaction is N-(11Z-eicosenoyl)-sphing-4-enine + H2O = (11Z)-eicosenoate + sphing-4-enine. The enzyme catalyses N-(11Z-eicosenoyl)-sphinganine + H2O = (11Z)-eicosenoate + sphinganine. It catalyses the reaction N-(11Z-eicosenoyl)-(4R)-hydroxysphinganine + H2O = (11Z)-eicosenoate + (4R)-hydroxysphinganine. It carries out the reaction N-(9Z-octadecenoyl)-sphing-4-enine + H2O = sphing-4-enine + (9Z)-octadecenoate. The catalysed reaction is N-(9Z-octadecenoyl)-sphinganine + H2O = sphinganine + (9Z)-octadecenoate. The enzyme catalyses N-(9Z-octadecenoyl)-(4R)-hydroxysphinganine + H2O = (4R)-hydroxysphinganine + (9Z)-octadecenoate. It catalyses the reaction an N-acylsphing-4-enine + H2O = sphing-4-enine + a fatty acid. It carries out the reaction an N-acylsphinganine + H2O = sphinganine + a fatty acid. It participates in lipid metabolism; sphingolipid metabolism. With respect to regulation, activated by Ca(2+) and inhibited by Zn(2+). Endoplasmic reticulum and Golgi ceramidase that catalyzes the hydrolysis of unsaturated long-chain C18:1-, C20:1- and C20:4-ceramides, dihydroceramides and phytoceramides into sphingoid bases like sphingosine and free fatty acids at alkaline pH. Ceramides, sphingosine, and its phosphorylated form sphingosine-1-phosphate are bioactive lipids that mediate cellular signaling pathways regulating several biological processes including cell proliferation, apoptosis and differentiation. Controls the generation of sphingosine in erythrocytes, and thereby sphingosine-1-phosphate in plasma. Through the regulation of ceramides and sphingosine-1-phosphate homeostasis in the brain may play a role in neurons survival and function. By regulating the levels of pro-inflammatory ceramides in immune cells and tissues, may modulate the inflammatory response. This Mus musculus (Mouse) protein is Alkaline ceramidase 3 (Acer3).